A 497-amino-acid polypeptide reads, in one-letter code: Protein nucleotidyltransferase YdiU (497 aa).

Positions 88, 90, 91, 110, 122, 123, 173, and 180 each coordinate ATP. Aspartate 249 (proton acceptor) is an active-site residue. Mg(2+)-binding residues include asparagine 250 and aspartate 259. An ATP-binding site is contributed by aspartate 259.

It belongs to the SELO family. The cofactor is Mg(2+). It depends on Mn(2+) as a cofactor.

It carries out the reaction L-seryl-[protein] + ATP = 3-O-(5'-adenylyl)-L-seryl-[protein] + diphosphate. The catalysed reaction is L-threonyl-[protein] + ATP = 3-O-(5'-adenylyl)-L-threonyl-[protein] + diphosphate. The enzyme catalyses L-tyrosyl-[protein] + ATP = O-(5'-adenylyl)-L-tyrosyl-[protein] + diphosphate. It catalyses the reaction L-histidyl-[protein] + UTP = N(tele)-(5'-uridylyl)-L-histidyl-[protein] + diphosphate. It carries out the reaction L-seryl-[protein] + UTP = O-(5'-uridylyl)-L-seryl-[protein] + diphosphate. The catalysed reaction is L-tyrosyl-[protein] + UTP = O-(5'-uridylyl)-L-tyrosyl-[protein] + diphosphate. Nucleotidyltransferase involved in the post-translational modification of proteins. It can catalyze the addition of adenosine monophosphate (AMP) or uridine monophosphate (UMP) to a protein, resulting in modifications known as AMPylation and UMPylation. This Methylorubrum extorquens (strain CM4 / NCIMB 13688) (Methylobacterium extorquens) protein is Protein nucleotidyltransferase YdiU.